Here is a 208-residue protein sequence, read N- to C-terminus: MLKTIQKHGVTLAVFAALTTGLTAMVNALTKTTIEGQAALQQKQLFDQVLPPEMYDNDIQQSCYLVSAPALGRGEKQLWVARKGDTPVAVVMQATAPDGYSGAIQLLVGADFKGTVLGTRVTEHHETPGLGDKIETRISDWITGFAGQVIHGPNDTRWAVKKDGGQFDQFTGATITPRAVVNAVKRAGLYAQTLEPQLSTLPSCGENP.

A helical membrane pass occupies residues 9–29 (GVTLAVFAALTTGLTAMVNAL). An FMN phosphoryl threonine modification is found at T174.

Belongs to the RnfG family. As to quaternary structure, the complex is composed of six subunits: RnfA, RnfB, RnfC, RnfD, RnfE and RnfG. Requires FMN as cofactor.

It is found in the cell inner membrane. In terms of biological role, part of a membrane-bound complex that couples electron transfer with translocation of ions across the membrane. The sequence is that of Ion-translocating oxidoreductase complex subunit G from Cronobacter sakazakii (strain ATCC BAA-894) (Enterobacter sakazakii).